Consider the following 448-residue polypeptide: Tapasin (448 aa).

The first 20 residues, Met-1–Ala-20, serve as a signal peptide directing secretion. Topologically, residues Gly-21–Val-414 are lumenal. A disulfide bond links Cys-27 and Cys-91. An N-linked (GlcNAc...) asparagine glycan is attached at Asn-253. In terms of domain architecture, Ig-like C1-type spans Pro-292 to Thr-399. Cys-315 and Cys-382 are oxidised to a cystine. A helical transmembrane segment spans residues Gly-415–Val-435. At Tyr-436–Glu-448 the chain is on the cytoplasmic side.

As to quaternary structure, heterodimer with PDIA3; disulfide-linked. Obligatory mediator for the interaction between newly assembled MHC class I molecules, calreticulin, PDIA3 and TAP. Up to 4 MHC class I/tapasin complexes bind to 1 TAP. Interacts with HLA-G-B2M complex; this interaction is required for loading of high affinity peptides. On its own or as part of MHC class I peptide loading complex, interacts with ligand-free MR1 or MR1-B2M complex, providing for stable MR1 pools ready for metabolite antigen processing. Neutrophils, mostly in fully differentiated cells.

It localises to the endoplasmic reticulum membrane. In terms of biological role, involved in the association of MHC class I with transporter associated with antigen processing (TAP) and in the assembly of MHC class I with peptide (peptide loading). In Homo sapiens (Human), this protein is Tapasin.